Reading from the N-terminus, the 277-residue chain is Putative hydro-lyase BP1875 (277 aa).

This sequence belongs to the D-glutamate cyclase family.

This is Putative hydro-lyase BP1875 from Bordetella pertussis (strain Tohama I / ATCC BAA-589 / NCTC 13251).